The following is a 530-amino-acid chain: MEPRAVADALETGEEDAVTEALRSFNREHSQSFTFDDAQQEDRKRLAKLLVSVLEQGLSPKHRVTWLQTIRILSRDRSCLDSFASRQSLHALACYADITVSEEPIPQSPDMDVLLESLKCLCNLVLSSPTAQMLAAEARLVVRLAERVGLYRKRSYPHEVQFFDLRLLFLLTALRTDVRQQLFQELHGVRLLTDALELTLGVAPKENPPVMLPAQETERAMEILKVLFNITFDSVKREVDEEDAALYRYLGTLLRHCVMVEAAGDRTEEFHGHTVNLLGNLPLKCLDVLLALELHEGSLEFMGVNMDVISALLAFLEKRLHQTHRLKECVAPVLNVLTECARMHRPARKFLKAQVLPPLRDVRTRPEVGDLLRNKLVRLMTHLDTDVKRVAAEFLFVLCSESVPRFIKYTGYGNAAGLLAARGLMAGGRPEGQYSEDEDTDTEEYREAKASINPVTGRVEEKPPNPMEGMTEEQKEHEAMKLVNMFDKLSRHRVIQPMGMSPRGHLTSLQDAMCETMEGQLSSDPDSDPD.

At Ser435 the chain carries Phosphoserine. Thr440 and Thr442 each carry phosphothreonine. Ser501, Ser522, Ser523, and Ser527 each carry phosphoserine.

The protein belongs to the synembryn family. Interacts with GDP-bound G alpha proteins GNAI1, GNAO1 and GNAQ, and with GNA13 with lower affinity. Does not interact with G-alpha proteins when they are in complex with subunits beta and gamma. Interacts (via C-terminus) with RGS14; the interaction stimulates the dissociation of the complex between RGS14 and the active GTP-bound form of GNAI1. Interacts with NCS1; interaction is favored in the absence of Ca(2+) and myristoylation of NCS1 is not required. In terms of tissue distribution, expressed in neurons and neurites of the CA1 and CA2 subregions of the hippocampus (at protein level). In adult brain, it is expressed in the neocortex, hippocampus and cerebellum as well as in the pineal gland and ependymal layer.

The protein resides in the cytoplasm. The protein localises to the cell cortex. Functionally, chaperone that specifically binds and folds nascent G alpha proteins prior to G protein heterotrimer formation, promoting their stability and activity: folds GNAI1, GNAO1, GNA13 and GNAQ. Does not fold G(s) G-alpha proteins GNAS nor GNAL. Also acts as a guanine nucleotide exchange factor (GEF) for G alpha proteins by stimulating exchange of bound GDP for free GTP. Involved in regulation of microtubule pulling forces during mitotic movement of chromosomes by stimulating G(i)-alpha protein (GNAI1), possibly leading to release G(i)-alpha-GTP and NuMA proteins from the NuMA-GPSM2-G(i)-alpha-GDP complex. Also acts as an activator for G(q)-alpha (GNAQ) protein by enhancing the G(q)-coupled receptor-mediated ERK activation. The polypeptide is Chaperone Ric-8A (Mus musculus (Mouse)).